The sequence spans 364 residues: MKFNKHLQNIKTYEAGKPIELVVREYGIEPQDIVKLASNENPLGCSPKVIDAVGKILTKMSLYPDDSMISLKNALSKRYNVDSENVIIGSGSDQVIEFLIHAKAHSGSKILMNSITFAMYEIYSKHVGADVIRTSSQEHDLDEFYELYKQEKPEIIFICTPNNPTGDALDAQKIYNFLEKIDNDTLVVVDAAYMEYAIVKDAKKEINVKELIQKHSNVIYLGTFSKAYGLGGMRVGYGISEAKIIKELYKLRPPFNITTLSLEAATVALSDEEFVQKSTALNLEQMKRYEEFAKEQKIDIINSYTNFVTLSLGSNQNSTKIASQLLQNGMIVRDLSSYNMNAIRVTIGTQEQNSRFFKLVIKFL.

N6-(pyridoxal phosphate)lysine is present on Lys226.

The protein belongs to the class-II pyridoxal-phosphate-dependent aminotransferase family. Histidinol-phosphate aminotransferase subfamily. Homodimer. Requires pyridoxal 5'-phosphate as cofactor.

The catalysed reaction is L-histidinol phosphate + 2-oxoglutarate = 3-(imidazol-4-yl)-2-oxopropyl phosphate + L-glutamate. The protein operates within amino-acid biosynthesis; L-histidine biosynthesis; L-histidine from 5-phospho-alpha-D-ribose 1-diphosphate: step 7/9. The chain is Histidinol-phosphate aminotransferase from Sulfurimonas denitrificans (strain ATCC 33889 / DSM 1251) (Thiomicrospira denitrificans (strain ATCC 33889 / DSM 1251)).